The chain runs to 487 residues: Aspartyl/glutamyl-tRNA(Asn/Gln) amidotransferase subunit B (487 aa).

It belongs to the GatB/GatE family. GatB subfamily. In terms of assembly, heterotrimer of A, B and C subunits.

It catalyses the reaction L-glutamyl-tRNA(Gln) + L-glutamine + ATP + H2O = L-glutaminyl-tRNA(Gln) + L-glutamate + ADP + phosphate + H(+). The enzyme catalyses L-aspartyl-tRNA(Asn) + L-glutamine + ATP + H2O = L-asparaginyl-tRNA(Asn) + L-glutamate + ADP + phosphate + 2 H(+). Functionally, allows the formation of correctly charged Asn-tRNA(Asn) or Gln-tRNA(Gln) through the transamidation of misacylated Asp-tRNA(Asn) or Glu-tRNA(Gln) in organisms which lack either or both of asparaginyl-tRNA or glutaminyl-tRNA synthetases. The reaction takes place in the presence of glutamine and ATP through an activated phospho-Asp-tRNA(Asn) or phospho-Glu-tRNA(Gln). This Roseiflexus sp. (strain RS-1) protein is Aspartyl/glutamyl-tRNA(Asn/Gln) amidotransferase subunit B.